The chain runs to 125 residues: Glycine cleavage system H protein (125 aa).

The Lipoyl-binding domain maps to 23–104; sequence VVYIGITDYA…PYENWILKVK (82 aa). At K64 the chain carries N6-lipoyllysine.

It belongs to the GcvH family. The glycine cleavage system is composed of four proteins: P, T, L and H. Requires (R)-lipoate as cofactor.

Its function is as follows. The glycine cleavage system catalyzes the degradation of glycine. The H protein shuttles the methylamine group of glycine from the P protein to the T protein. The chain is Glycine cleavage system H protein from Clostridioides difficile (strain 630) (Peptoclostridium difficile).